A 56-amino-acid polypeptide reads, in one-letter code: Large ribosomal subunit protein bL32 (56 aa).

Belongs to the bacterial ribosomal protein bL32 family.

This chain is Large ribosomal subunit protein bL32, found in Synechococcus sp. (strain CC9311).